We begin with the raw amino-acid sequence, 375 residues long: tRNA-specific 2-thiouridylase MnmA (375 aa).

Residues 18–25 (GMSGGVDS) and Met-44 contribute to the ATP site. The interval 104–106 (NPD) is interaction with target base in tRNA. Residue Cys-109 is the Nucleophile of the active site. Residues Cys-109 and Cys-206 are joined by a disulfide bond. Gly-134 lines the ATP pocket. Residues 156-158 (KDQ) form an interaction with tRNA region. Cys-206 functions as the Cysteine persulfide intermediate in the catalytic mechanism. The interval 318–319 (RY) is interaction with tRNA.

The protein belongs to the MnmA/TRMU family.

Its subcellular location is the cytoplasm. It catalyses the reaction S-sulfanyl-L-cysteinyl-[protein] + uridine(34) in tRNA + AH2 + ATP = 2-thiouridine(34) in tRNA + L-cysteinyl-[protein] + A + AMP + diphosphate + H(+). Its function is as follows. Catalyzes the 2-thiolation of uridine at the wobble position (U34) of tRNA, leading to the formation of s(2)U34. This chain is tRNA-specific 2-thiouridylase MnmA, found in Colwellia psychrerythraea (strain 34H / ATCC BAA-681) (Vibrio psychroerythus).